The sequence spans 385 residues: Prostacyclin receptor (385 aa).

The Extracellular portion of the chain corresponds to 1 to 16 (MADSCRNLTYVRDSVG). Disulfide bonds link Cys-5–Cys-165 and Cys-92–Cys-170. Residue Asn-7 is glycosylated (N-linked (GlcNAc...) asparagine). The chain crosses the membrane as a helical span at residues 17–38 (PATSTLMFVAGVVGNGLALGIL). Residues 39 to 51 (GARRHSRPSAFAV) lie on the Cytoplasmic side of the membrane. The chain crosses the membrane as a helical span at residues 52–76 (LVTGLGVTDLLGTCFLSPAVFAAYA). The Extracellular portion of the chain corresponds to 77 to 94 (RNSSLLGLARGRPALCDA). A helical transmembrane segment spans residues 95 to 115 (FAFAMTFFGLASTLILFAMAV). At 116–134 (ERCLALSHPYLYAQLDGPR) the chain is on the cytoplasmic side. The helical transmembrane segment at 135 to 158 (RARLALPAIYAFCTIFCSLPFLGL) threads the bilayer. The Extracellular segment spans residues 159-181 (GQHQQYCPGSWCFIRMRSAEPGG). A helical membrane pass occupies residues 182 to 208 (CAFLLAYASLVALLVAAIVLCNGSVTL). At 209–234 (SLCRMYRQQRRHQARCPRPRAGEDEV) the chain is on the cytoplasmic side. The chain crosses the membrane as a helical span at residues 235-259 (DHLILLALMTGIMAVCSLPLTPQIR). Residues 260-273 (GFTQAIAPDSSEMG) are Extracellular-facing. The helical transmembrane segment at 274–294 (DLLAFRFNAFNPILDPWVFIL) threads the bilayer. The Cytoplasmic portion of the chain corresponds to 295–385 (FRKSVFQRLK…AGSEAACSLC (91 aa)). The tract at residues 315–344 (AQGDSRTSLSQSASGRKDSSAPPALEGKKG) is disordered. A compositionally biased stretch (polar residues) spans 318-328 (DSRTSLSQSAS). Position 382 is a cysteine methyl ester (Cys-382). Cys-382 carries S-farnesyl cysteine lipidation. Positions 383–385 (SLC) are cleaved as a propeptide — removed in mature form.

This sequence belongs to the G-protein coupled receptor 1 family. Interacts (non-isoprenylated C-terminus) with PDZK1. Post-translationally, isoprenylation does not influence ligand binding but is required for efficient coupling to the effectors adenylyl cyclase and phospholipase C.

The protein localises to the cell membrane. Functionally, receptor for prostacyclin (prostaglandin I2 or PGI2). The activity of this receptor is mediated by G(s) proteins which activate adenylate cyclase. The sequence is that of Prostacyclin receptor (PTGIR) from Bos taurus (Bovine).